Reading from the N-terminus, the 201-residue chain is Probable nicotinate-nucleotide adenylyltransferase (201 aa).

It belongs to the NadD family.

It carries out the reaction nicotinate beta-D-ribonucleotide + ATP + H(+) = deamido-NAD(+) + diphosphate. It functions in the pathway cofactor biosynthesis; NAD(+) biosynthesis; deamido-NAD(+) from nicotinate D-ribonucleotide: step 1/1. Catalyzes the reversible adenylation of nicotinate mononucleotide (NaMN) to nicotinic acid adenine dinucleotide (NaAD). The polypeptide is Probable nicotinate-nucleotide adenylyltransferase (Bacteroides fragilis (strain YCH46)).